A 509-amino-acid chain; its full sequence is BPI fold-containing family C protein (509 aa).

The N-terminal stretch at 1 to 23 (MRTKQVPVLWACFLLWSLYIASS) is a signal peptide. Residues Asn63, Asn79, Asn92, Asn113, and Asn117 are each glycosylated (N-linked (GlcNAc...) asparagine). A disulfide bridge connects residues Cys161 and Cys202. Asn215, Asn227, Asn357, Asn374, and Asn457 each carry an N-linked (GlcNAc...) asparagine glycan.

It belongs to the BPI/LBP/Plunc superfamily. BPI/LBP family.

The protein resides in the secreted. This chain is BPI fold-containing family C protein (Bpifc), found in Mus musculus (Mouse).